The primary structure comprises 520 residues: Dynein axonemal assembly factor 8 (520 aa).

4 disordered regions span residues 93–202, 217–256, 328–366, and 388–520; these read PVLV…LRQE, RDAC…EGPP, CARK…QLAQ, and DHLS…LEQL. Residues 111-125 show a composition bias toward basic and acidic residues; it reads RTKDASSQEGRDPGR. Serine 161 carries the phosphoserine modification. Serine 351 carries the post-translational modification Phosphoserine. Residues 401 to 410 are compositionally biased toward acidic residues; the sequence is DSEEEEEEEM. A compositionally biased stretch (polar residues) spans 420–437; that stretch reads SPSSLGLRTCTGKSQLLQ.

Expressed in respiratory ciliated cells (at protein level).

It localises to the dynein axonemal particle. The protein localises to the cytoplasm. Its function is as follows. In cyliated cells, dynein axonemal particle-specific protein required for deployment of ODA to the axoneme. Interacts with outer dynein arm (ODA) subunits. This chain is Dynein axonemal assembly factor 8, found in Homo sapiens (Human).